The primary structure comprises 156 residues: Small ribosomal subunit protein uS7 (156 aa).

This sequence belongs to the universal ribosomal protein uS7 family. As to quaternary structure, part of the 30S ribosomal subunit. Contacts proteins S9 and S11.

Its function is as follows. One of the primary rRNA binding proteins, it binds directly to 16S rRNA where it nucleates assembly of the head domain of the 30S subunit. Is located at the subunit interface close to the decoding center, probably blocks exit of the E-site tRNA. In Deinococcus radiodurans (strain ATCC 13939 / DSM 20539 / JCM 16871 / CCUG 27074 / LMG 4051 / NBRC 15346 / NCIMB 9279 / VKM B-1422 / R1), this protein is Small ribosomal subunit protein uS7.